Consider the following 248-residue polypeptide: Sugar fermentation stimulation protein homolog (248 aa).

It belongs to the SfsA family.

The chain is Sugar fermentation stimulation protein homolog from Prochlorococcus marinus subsp. pastoris (strain CCMP1986 / NIES-2087 / MED4).